The following is a 180-amino-acid chain: uncharacterized protein (180 aa).

The N-terminal stretch at 1-21 is a signal peptide; sequence MKQCIAFMAILALSLSAISEA. The tract at residues 23–81 is disordered; the sequence is GGRGVRSSGYSRPVATKPAPAPKQTQTQQQSQQPDATFGQQNMQNTATNTPNNPNNRLA. Positions 27–78 are enriched in low complexity; sequence VRSSGYSRPVATKPAPAPKQTQTQQQSQQPDATFGQQNMQNTATNTPNNPNN.

This is an uncharacterized protein from Pasteurella multocida (strain Pm70).